The chain runs to 133 residues: Small ribosomal subunit protein bS6 (133 aa).

It belongs to the bacterial ribosomal protein bS6 family.

Binds together with bS18 to 16S ribosomal RNA. This is Small ribosomal subunit protein bS6 from Chlorobium phaeovibrioides (strain DSM 265 / 1930) (Prosthecochloris vibrioformis (strain DSM 265)).